A 255-amino-acid polypeptide reads, in one-letter code: 5'-nucleotidase SurE (255 aa).

4 residues coordinate a divalent metal cation: Asp16, Asp17, Ser47, and Asn100.

Belongs to the SurE nucleotidase family. A divalent metal cation is required as a cofactor.

Its subcellular location is the cytoplasm. The catalysed reaction is a ribonucleoside 5'-phosphate + H2O = a ribonucleoside + phosphate. In terms of biological role, nucleotidase that shows phosphatase activity on nucleoside 5'-monophosphates. In Vibrio vulnificus (strain CMCP6), this protein is 5'-nucleotidase SurE.